The primary structure comprises 369 residues: Protein-glutamate methylesterase/protein-glutamine glutaminase (369 aa).

The Response regulatory domain maps to 4 to 121 (KVLVVDDSSF…ARNRDEAVSL (118 aa)). Asp55 is modified (4-aspartylphosphate). A compositionally biased stretch (low complexity) spans 146-171 (ATSSARPLASRTAAPAASAPARPATT). The interval 146-175 (ATSSARPLASRTAAPAASAPARPATTKFRA) is disordered. The region spanning 176–369 (SGKKYQLTAI…ERMLVEVGLA (194 aa)) is the CheB-type methylesterase domain. Active-site residues include Ser188, His215, and Asp311.

This sequence belongs to the CheB family. Phosphorylated by CheA. Phosphorylation of the N-terminal regulatory domain activates the methylesterase activity.

It localises to the cytoplasm. It carries out the reaction [protein]-L-glutamate 5-O-methyl ester + H2O = L-glutamyl-[protein] + methanol + H(+). The catalysed reaction is L-glutaminyl-[protein] + H2O = L-glutamyl-[protein] + NH4(+). Involved in chemotaxis. Part of a chemotaxis signal transduction system that modulates chemotaxis in response to various stimuli. Catalyzes the demethylation of specific methylglutamate residues introduced into the chemoreceptors (methyl-accepting chemotaxis proteins or MCP) by CheR. Also mediates the irreversible deamidation of specific glutamine residues to glutamic acid. This is Protein-glutamate methylesterase/protein-glutamine glutaminase from Vibrio parahaemolyticus serotype O3:K6 (strain RIMD 2210633).